The chain runs to 392 residues: Digeranylgeranylglycerophospholipid reductase (392 aa).

10 residues coordinate FAD: Gly-15, Glu-34, Cys-45, Ala-46, Gly-48, Arg-99, Ala-123, Asp-279, Gly-291, and Ile-292. Val-370 serves as a coordination point for a 2,3-bis-O-(geranylgeranyl)-sn-glycerol 1-phospholipid.

The protein belongs to the geranylgeranyl reductase family. DGGGPL reductase subfamily. The cofactor is FAD.

The enzyme catalyses a 2,3-bis-O-phytanyl-sn-glycerol 1-phospholipid + 8 oxidized 2[4Fe-4S]-[ferredoxin] = a 2,3-bis-O-(geranylgeranyl)-sn-glycerol 1-phospholipid + 8 reduced 2[4Fe-4S]-[ferredoxin] + 16 H(+). It catalyses the reaction 2,3-bis-O-(phytanyl)-sn-glycerol 1-phosphate + 8 oxidized 2[4Fe-4S]-[ferredoxin] = 2,3-bis-O-(geranylgeranyl)-sn-glycerol 1-phosphate + 8 reduced 2[4Fe-4S]-[ferredoxin] + 16 H(+). It carries out the reaction a 2,3-bis-O-phytanyl-sn-glycerol 1-phospholipid + 8 A = a 2,3-bis-O-(geranylgeranyl)-sn-glycerol 1-phospholipid + 8 AH2. The catalysed reaction is CDP-2,3-bis-O-(geranylgeranyl)-sn-glycerol + 8 AH2 = CDP-2,3-bis-O-(phytanyl)-sn-glycerol + 8 A. The enzyme catalyses archaetidylserine + 8 AH2 = 2,3-bis-O-phytanyl-sn-glycero-3-phospho-L-serine + 8 A. It functions in the pathway membrane lipid metabolism; glycerophospholipid metabolism. Is involved in the reduction of 2,3-digeranylgeranylglycerophospholipids (unsaturated archaeols) into 2,3-diphytanylglycerophospholipids (saturated archaeols) in the biosynthesis of archaeal membrane lipids. Catalyzes the formation of archaetidic acid (2,3-di-O-phytanyl-sn-glyceryl phosphate) from 2,3-di-O-geranylgeranylglyceryl phosphate (DGGGP) via the hydrogenation of each double bond of the isoprenoid chains. Is also probably able to reduce double bonds of geranyl groups in CDP-2,3-bis-O-(geranylgeranyl)-sn-glycerol and archaetidylserine, thus acting at various stages in the biosynthesis of archaeal membrane lipids. This is Digeranylgeranylglycerophospholipid reductase from Methanocella arvoryzae (strain DSM 22066 / NBRC 105507 / MRE50).